Here is a 394-residue protein sequence, read N- to C-terminus: Phosphoglycerate kinase (394 aa).

Residues 21 to 23 (DFN), arginine 36, 59 to 62 (HMGR), arginine 118, and arginine 151 each bind substrate. ATP is bound by residues lysine 202, glutamate 324, and 350–353 (GGDS).

Belongs to the phosphoglycerate kinase family. As to quaternary structure, monomer.

It localises to the cytoplasm. It carries out the reaction (2R)-3-phosphoglycerate + ATP = (2R)-3-phospho-glyceroyl phosphate + ADP. Its pathway is carbohydrate degradation; glycolysis; pyruvate from D-glyceraldehyde 3-phosphate: step 2/5. The polypeptide is Phosphoglycerate kinase (Exiguobacterium sibiricum (strain DSM 17290 / CCUG 55495 / CIP 109462 / JCM 13490 / 255-15)).